Here is a 73-residue protein sequence, read N- to C-terminus: Probable minor pilin MMP0528 (73 aa).

Positions 1–10 (MLKKLYSKKG) are excised as a propeptide. Positions 11-19 (QVSMEMGIL) match the QXSXEXXXL motif.

Post-translationally, the N-terminus is probably cleaved by the prepilin peptidase EppA, which recognizes the class III signal sequence.

Its subcellular location is the secreted. It localises to the cell surface. It is found in the fimbrium. This Methanococcus maripaludis (strain DSM 14266 / JCM 13030 / NBRC 101832 / S2 / LL) protein is Probable minor pilin MMP0528.